Consider the following 92-residue polypeptide: Small ribosomal subunit protein uS19 (92 aa).

The disordered stretch occupies residues methionine 1–lysine 27. Residues proline 9 to lysine 27 show a composition bias toward basic and acidic residues.

This sequence belongs to the universal ribosomal protein uS19 family.

In terms of biological role, protein S19 forms a complex with S13 that binds strongly to the 16S ribosomal RNA. In Staphylococcus saprophyticus subsp. saprophyticus (strain ATCC 15305 / DSM 20229 / NCIMB 8711 / NCTC 7292 / S-41), this protein is Small ribosomal subunit protein uS19.